An 84-amino-acid chain; its full sequence is Defensin-like protein 172 (84 aa).

Positions 1–23 (MAKASSTLVLSIIFLVMFALVEQ) are cleaved as a signal peptide. Cystine bridges form between cysteine 27–cysteine 74, cysteine 34–cysteine 56, cysteine 40–cysteine 68, and cysteine 44–cysteine 70.

This sequence belongs to the DEFL family.

The protein localises to the secreted. The chain is Defensin-like protein 172 (LCR60) from Arabidopsis thaliana (Mouse-ear cress).